The chain runs to 689 residues: Ataxin-1-like (689 aa).

Residues 1–19 (MKPVHERSQECLPPKKRDL) show a composition bias toward basic and acidic residues. Disordered stretches follow at residues 1 to 46 (MKPV…SEWS), 185 to 223 (ATPPPQAPSPAHSFNKAPSATSPSGQLPHHSSTQPLDLA), and 242 to 297 (LHET…GEGQ). An interaction with NCOR2 and ATXN1 region spans residues 20–197 (PVTSEDMGRT…PPQAPSPAHS (178 aa)). Residues 20–197 (PVTSEDMGRT…PPQAPSPAHS (178 aa)) form a self-association region. 2 stretches are compositionally biased toward polar residues: residues 28–43 (RTTSCSTNHTPSSDAS) and 200–219 (KAPSATSPSGQLPHHSSTQP). The segment covering 257-268 (QESQSALEAAAA) has biased composition (low complexity). Basic and acidic residues predominate over residues 273–285 (RPRERNLVRRESE). A Phosphoserine modification is found at S284. At T330 the chain carries Phosphothreonine. Residues 357-405 (KEEPSPLNLSHHTPDHQGEGRGSARNPAELAEKSQARGFYPQSHQEPVK) are disordered. S361 carries the post-translational modification Phosphoserine. Positions 457–588 (PPPITSSHLP…SISLQSLNSN (132 aa)) constitute an AXH domain. S615 carries the post-translational modification Phosphoserine. Residues 617-647 (ELCDSEGKSQPAGEGSRVVEPSQPESGAQAC) are disordered.

Belongs to the ATXN1 family. Homodimer. Interacts with CIC. Interacts (via AXH domain) with NCOR2. Interacts with ATXN1. Directly interacts with RBPJ; this interaction is disrupted in the presence of Notch intracellular domain. Competes with ATXN1 for RBPJ-binding. Found in a complex with CIC and ATXN1. As to expression, expressed in cerebellum and cerebral cortex.

The protein localises to the nucleus. It localises to the cell projection. The protein resides in the dendrite. Its function is as follows. Chromatin-binding factor that repress Notch signaling in the absence of Notch intracellular domain by acting as a CBF1 corepressor. Binds to the HEY promoter and might assist, along with NCOR2, RBPJ-mediated repression. Can suppress ATXN1 cytotoxicity in spinocerebellar ataxia type 1 (SCA1). In concert with CIC and ATXN1, involved in brain development. The polypeptide is Ataxin-1-like (ATXN1L) (Homo sapiens (Human)).